The chain runs to 393 residues: Formate-dependent phosphoribosylglycinamide formyltransferase (393 aa).

Residues 22 to 23 and Glu-82 contribute to the N(1)-(5-phospho-beta-D-ribosyl)glycinamide site; that span reads EL. ATP contacts are provided by residues Arg-114, Lys-155, 160–165, 195–198, and Glu-203; these read SSGHGQ and EGFV. One can recognise an ATP-grasp domain in the interval 119 to 308; that stretch reads RLAAEELGLP…EFALHARAIL (190 aa). Positions 267 and 279 each coordinate Mg(2+). N(1)-(5-phospho-beta-D-ribosyl)glycinamide contacts are provided by residues Asp-286, Lys-356, and 363 to 364; that span reads RR.

The protein belongs to the PurK/PurT family. As to quaternary structure, homodimer.

The enzyme catalyses N(1)-(5-phospho-beta-D-ribosyl)glycinamide + formate + ATP = N(2)-formyl-N(1)-(5-phospho-beta-D-ribosyl)glycinamide + ADP + phosphate + H(+). It functions in the pathway purine metabolism; IMP biosynthesis via de novo pathway; N(2)-formyl-N(1)-(5-phospho-D-ribosyl)glycinamide from N(1)-(5-phospho-D-ribosyl)glycinamide (formate route): step 1/1. Involved in the de novo purine biosynthesis. Catalyzes the transfer of formate to 5-phospho-ribosyl-glycinamide (GAR), producing 5-phospho-ribosyl-N-formylglycinamide (FGAR). Formate is provided by PurU via hydrolysis of 10-formyl-tetrahydrofolate. This is Formate-dependent phosphoribosylglycinamide formyltransferase from Pasteurella multocida (strain Pm70).